The following is a 286-amino-acid chain: Pantothenate synthetase (286 aa).

30-37 (MGNLHDGH) serves as a coordination point for ATP. The active-site Proton donor is the H37. Q61 contacts (R)-pantoate. Position 61 (Q61) interacts with beta-alanine. Residue 148–151 (GKKD) participates in ATP binding. Q154 is a (R)-pantoate binding site. Residues V177 and 185–188 (LSSR) each bind ATP.

The protein belongs to the pantothenate synthetase family. As to quaternary structure, homodimer.

It is found in the cytoplasm. The catalysed reaction is (R)-pantoate + beta-alanine + ATP = (R)-pantothenate + AMP + diphosphate + H(+). The protein operates within cofactor biosynthesis; (R)-pantothenate biosynthesis; (R)-pantothenate from (R)-pantoate and beta-alanine: step 1/1. Its function is as follows. Catalyzes the condensation of pantoate with beta-alanine in an ATP-dependent reaction via a pantoyl-adenylate intermediate. The sequence is that of Pantothenate synthetase from Psychrobacter sp. (strain PRwf-1).